The chain runs to 414 residues: Collagenase (414 aa).

It belongs to the peptidase U32 family. As to quaternary structure, homodimer. A metal cation is required as a cofactor.

Has collagenase activity. Hydrolyzes type I collagen. May play a role in virulence. The sequence is that of Collagenase (prtC) from Porphyromonas gingivalis (strain ATCC BAA-308 / W83).